The chain runs to 376 residues: Chaperone protein DnaJ (376 aa).

A J domain is found at Asp4–Gly70. The CR-type zinc finger occupies Gly139–Gln217. Residues Cys152, Cys155, Cys169, Cys172, Cys191, Cys194, Cys205, and Cys208 each coordinate Zn(2+). CXXCXGXG motif repeat units lie at residues Cys152–Gly159, Cys169–Gly176, Cys191–Gly198, and Cys205–Gly212.

This sequence belongs to the DnaJ family. Homodimer. Requires Zn(2+) as cofactor.

The protein localises to the cytoplasm. Its function is as follows. Participates actively in the response to hyperosmotic and heat shock by preventing the aggregation of stress-denatured proteins and by disaggregating proteins, also in an autonomous, DnaK-independent fashion. Unfolded proteins bind initially to DnaJ; upon interaction with the DnaJ-bound protein, DnaK hydrolyzes its bound ATP, resulting in the formation of a stable complex. GrpE releases ADP from DnaK; ATP binding to DnaK triggers the release of the substrate protein, thus completing the reaction cycle. Several rounds of ATP-dependent interactions between DnaJ, DnaK and GrpE are required for fully efficient folding. Also involved, together with DnaK and GrpE, in the DNA replication of plasmids through activation of initiation proteins. The chain is Chaperone protein DnaJ from Rickettsia bellii (strain OSU 85-389).